Here is a 443-residue protein sequence, read N- to C-terminus: 23S rRNA (uracil(1939)-C(5))-methyltransferase RlmD (443 aa).

Positions 12 to 70 constitute a TRAM domain; sequence AKKLSQKIALKVQRLDHLGAGIAEHQGKVVFIPGALPGETVEVQLTEQKKNYARAKLQR. Positions 83, 89, 92, and 171 each coordinate [4Fe-4S] cluster. 6 residues coordinate S-adenosyl-L-methionine: Q276, F305, N310, E326, D353, and D373. The active-site Nucleophile is C399.

The protein belongs to the class I-like SAM-binding methyltransferase superfamily. RNA M5U methyltransferase family. RlmD subfamily.

The enzyme catalyses uridine(1939) in 23S rRNA + S-adenosyl-L-methionine = 5-methyluridine(1939) in 23S rRNA + S-adenosyl-L-homocysteine + H(+). Functionally, catalyzes the formation of 5-methyl-uridine at position 1939 (m5U1939) in 23S rRNA. In Shewanella amazonensis (strain ATCC BAA-1098 / SB2B), this protein is 23S rRNA (uracil(1939)-C(5))-methyltransferase RlmD.